A 347-amino-acid polypeptide reads, in one-letter code: Holliday junction branch migration complex subunit RuvB (347 aa).

The tract at residues 1–180 (MTSRVVSPEQ…FGIPCRMNFY (180 aa)) is large ATPase domain (RuvB-L). Residues L19, R20, G61, K64, T65, T66, 127 to 129 (EDF), R170, Y180, and R217 each bind ATP. T65 is a binding site for Mg(2+). Positions 181–251 (EPAELEAIVS…VADAALNRLE (71 aa)) are small ATPAse domain (RuvB-S). The interval 254 to 347 (RIGLDAMDRR…LLTRMDEEGE (94 aa)) is head domain (RuvB-H). The DNA site is built by R290, R309, and R314.

It belongs to the RuvB family. As to quaternary structure, homohexamer. Forms an RuvA(8)-RuvB(12)-Holliday junction (HJ) complex. HJ DNA is sandwiched between 2 RuvA tetramers; dsDNA enters through RuvA and exits via RuvB. An RuvB hexamer assembles on each DNA strand where it exits the tetramer. Each RuvB hexamer is contacted by two RuvA subunits (via domain III) on 2 adjacent RuvB subunits; this complex drives branch migration. In the full resolvosome a probable DNA-RuvA(4)-RuvB(12)-RuvC(2) complex forms which resolves the HJ.

The protein resides in the cytoplasm. The enzyme catalyses ATP + H2O = ADP + phosphate + H(+). Its function is as follows. The RuvA-RuvB-RuvC complex processes Holliday junction (HJ) DNA during genetic recombination and DNA repair, while the RuvA-RuvB complex plays an important role in the rescue of blocked DNA replication forks via replication fork reversal (RFR). RuvA specifically binds to HJ cruciform DNA, conferring on it an open structure. The RuvB hexamer acts as an ATP-dependent pump, pulling dsDNA into and through the RuvAB complex. RuvB forms 2 homohexamers on either side of HJ DNA bound by 1 or 2 RuvA tetramers; 4 subunits per hexamer contact DNA at a time. Coordinated motions by a converter formed by DNA-disengaged RuvB subunits stimulates ATP hydrolysis and nucleotide exchange. Immobilization of the converter enables RuvB to convert the ATP-contained energy into a lever motion, pulling 2 nucleotides of DNA out of the RuvA tetramer per ATP hydrolyzed, thus driving DNA branch migration. The RuvB motors rotate together with the DNA substrate, which together with the progressing nucleotide cycle form the mechanistic basis for DNA recombination by continuous HJ branch migration. Branch migration allows RuvC to scan DNA until it finds its consensus sequence, where it cleaves and resolves cruciform DNA. In Paramagnetospirillum magneticum (strain ATCC 700264 / AMB-1) (Magnetospirillum magneticum), this protein is Holliday junction branch migration complex subunit RuvB.